Reading from the N-terminus, the 285-residue chain is Shikimate dehydrogenase (NADP(+)) (285 aa).

Residues 20 to 22 (SLS) and Thr-67 contribute to the shikimate site. Residue Lys-71 is the Proton acceptor of the active site. Glu-83 provides a ligand contact to NADP(+). Residues Asn-92 and Asp-107 each coordinate shikimate. NADP(+) contacts are provided by residues 132–136 (GAGGA) and Leu-230. Residue Tyr-232 participates in shikimate binding. Gly-253 contributes to the NADP(+) binding site.

The protein belongs to the shikimate dehydrogenase family. As to quaternary structure, homodimer.

It carries out the reaction shikimate + NADP(+) = 3-dehydroshikimate + NADPH + H(+). Its pathway is metabolic intermediate biosynthesis; chorismate biosynthesis; chorismate from D-erythrose 4-phosphate and phosphoenolpyruvate: step 4/7. Its function is as follows. Involved in the biosynthesis of the chorismate, which leads to the biosynthesis of aromatic amino acids. Catalyzes the reversible NADPH linked reduction of 3-dehydroshikimate (DHSA) to yield shikimate (SA). This is Shikimate dehydrogenase (NADP(+)) from Salinibacter ruber (strain DSM 13855 / M31).